The chain runs to 170 residues: Peptide deformylase (170 aa).

Fe cation-binding residues include Cys-93 and His-135. The active site involves Glu-136. His-139 is a binding site for Fe cation.

This sequence belongs to the polypeptide deformylase family. It depends on Fe(2+) as a cofactor.

The enzyme catalyses N-terminal N-formyl-L-methionyl-[peptide] + H2O = N-terminal L-methionyl-[peptide] + formate. Functionally, removes the formyl group from the N-terminal Met of newly synthesized proteins. Requires at least a dipeptide for an efficient rate of reaction. N-terminal L-methionine is a prerequisite for activity but the enzyme has broad specificity at other positions. The protein is Peptide deformylase of Syntrophobacter fumaroxidans (strain DSM 10017 / MPOB).